The sequence spans 197 residues: Phosphoheptose isomerase (197 aa).

Positions 36-197 constitute an SIS domain; it reads MTASLMNNGK…IDCLLLGVEE (162 aa). 51-53 serves as a coordination point for substrate; that stretch reads NGG. Residues histidine 60 and glutamate 64 each contribute to the Zn(2+) site. Residues glutamate 64, 93-94, 119-121, serine 124, and glutamine 174 contribute to the substrate site; these read ND and STS. Residues glutamine 174 and histidine 182 each coordinate Zn(2+).

It belongs to the SIS family. GmhA subfamily. As to quaternary structure, homotetramer. The cofactor is Zn(2+).

It localises to the cytoplasm. The catalysed reaction is 2 D-sedoheptulose 7-phosphate = D-glycero-alpha-D-manno-heptose 7-phosphate + D-glycero-beta-D-manno-heptose 7-phosphate. The protein operates within carbohydrate biosynthesis; D-glycero-D-manno-heptose 7-phosphate biosynthesis; D-glycero-alpha-D-manno-heptose 7-phosphate and D-glycero-beta-D-manno-heptose 7-phosphate from sedoheptulose 7-phosphate: step 1/1. Its function is as follows. Catalyzes the isomerization of sedoheptulose 7-phosphate in D-glycero-D-manno-heptose 7-phosphate. The chain is Phosphoheptose isomerase from Azoarcus sp. (strain BH72).